A 102-amino-acid polypeptide reads, in one-letter code: U3-aranetoxin-Ce1a (102 aa).

The signal sequence occupies residues 1–21 (MKHLSIFFVFFCCICVMLCDA).

This sequence belongs to the neurotoxin 20 family. Expressed by the venom gland.

It localises to the secreted. The sequence is that of U3-aranetoxin-Ce1a from Caerostris extrusa (Bark spider).